A 330-amino-acid chain; its full sequence is Stomatin-1 (330 aa).

Positions 1–19 are enriched in polar residues; it reads MQPSETVEMQEMAQPSGQQ. The segment at 1–27 is disordered; that stretch reads MQPSETVEMQEMAQPSGQQRDVEARVQ. Residues 42 to 62 traverse the membrane as a helical segment; that stretch reads MFCIAMSYVLIFLTFPVSVFM.

This sequence belongs to the band 7/mec-2 family.

The protein localises to the membrane. This chain is Stomatin-1 (sto-1), found in Caenorhabditis elegans.